Reading from the N-terminus, the 143-residue chain is Ribosome maturation factor RimP (143 aa).

The protein belongs to the RimP family.

Its subcellular location is the cytoplasm. Functionally, required for maturation of 30S ribosomal subunits. The protein is Ribosome maturation factor RimP of Borrelia recurrentis (strain A1).